Reading from the N-terminus, the 71-residue chain is Small ribosomal subunit protein bS21 (71 aa).

Residues H37–Y71 form a disordered region. The span at R45–K59 shows a compositional bias: basic residues. The span at L60–Y71 shows a compositional bias: basic and acidic residues.

The protein belongs to the bacterial ribosomal protein bS21 family.

This Pseudoalteromonas translucida (strain TAC 125) protein is Small ribosomal subunit protein bS21.